The chain runs to 279 residues: MSAIIELKKVTFNYHKDQEKPTLDGVSFHVKQGEWLSIIGHNGSGKSTTIRLIDGLLEPESGSVIVDGDLLTITNVWEIRHKIGMVFQNPDNQFVGATVEDDVAFGLENKGIAHEDIKERVNHALELVGMQNFKEKEPARLSGGQKQRVAIAGAVAMKPKIIILDEATSMLDPKGRLELIKTIKNIRDDYQLTVISITHDLDEVALSDRVLVMKDGQVESTSTPEQLFARGDELLQLGLDIPFTTSVVQMLQEEGYPVDYGYLTEKELENQLCQLISKM.

The ABC transporter domain occupies 5–240; sequence IELKKVTFNY…GDELLQLGLD (236 aa). 40 to 47 contacts ATP; it reads GHNGSGKS.

It belongs to the ABC transporter superfamily. Energy-coupling factor EcfA family. Forms a stable energy-coupling factor (ECF) transporter complex composed of 2 membrane-embedded substrate-binding proteins (S component), 2 ATP-binding proteins (A component) and 2 transmembrane proteins (T component).

The protein localises to the cell membrane. ATP-binding (A) component of a common energy-coupling factor (ECF) ABC-transporter complex. Unlike classic ABC transporters this ECF transporter provides the energy necessary to transport a number of different substrates. The chain is Energy-coupling factor transporter ATP-binding protein EcfA1 from Streptococcus pyogenes serotype M12 (strain MGAS2096).